The sequence spans 175 residues: Thioredoxin-like protein CITRX, chloroplastic (175 aa).

A chloroplast-targeting transit peptide spans 1–73 (MQAASLAFHP…REDYLVKKLS (73 aa)). In terms of domain architecture, Thioredoxin spans 74-175 (AKEIQELIKG…MMRDIINNDL (102 aa)). Residues C98 and C101 each act as nucleophile in the active site. Residues C98 and C101 are joined by a disulfide bond.

It belongs to the thioredoxin family. Plant CITRX-type subfamily.

Its subcellular location is the plastid. It is found in the chloroplast. Its function is as follows. Probable thiol-disulfide oxidoreductase that may play a role in proper chloroplast development. This Solanum tuberosum (Potato) protein is Thioredoxin-like protein CITRX, chloroplastic.